We begin with the raw amino-acid sequence, 108 residues long: NADH dehydrogenase [ubiquinone] flavoprotein 3, mitochondrial (108 aa).

Residues 1–34 (MAAPCLLRQGRAGALKTMLQEAQVFRGLASTVSL) constitute a mitochondrion transit peptide. The interval 33–72 (SLSAESGKSEKGQPHNPKKQSPPKKPAPVPAEPFDNTTYK) is disordered. Phosphoserine is present on Ser-105.

This sequence belongs to the complex I NDUFV3 subunit family. As to quaternary structure, complex I is composed of 45 different subunits. This is a component of the flavoprotein-sulfur (FP) fragment of the enzyme.

It is found in the mitochondrion inner membrane. In terms of biological role, accessory subunit of the mitochondrial membrane respiratory chain NADH dehydrogenase (Complex I), that is believed not to be involved in catalysis. Complex I functions in the transfer of electrons from NADH to the respiratory chain. The immediate electron acceptor for the enzyme is believed to be ubiquinone. May be the terminally assembled subunit of Complex I. The protein is NADH dehydrogenase [ubiquinone] flavoprotein 3, mitochondrial (NDUFV3) of Pongo pygmaeus (Bornean orangutan).